A 560-amino-acid polypeptide reads, in one-letter code: 2-succinyl-5-enolpyruvyl-6-hydroxy-3-cyclohexene-1-carboxylate synthase (560 aa).

This sequence belongs to the TPP enzyme family. MenD subfamily. As to quaternary structure, homodimer. The cofactor is Mg(2+). Requires Mn(2+) as cofactor. It depends on thiamine diphosphate as a cofactor.

It catalyses the reaction isochorismate + 2-oxoglutarate + H(+) = 5-enolpyruvoyl-6-hydroxy-2-succinyl-cyclohex-3-ene-1-carboxylate + CO2. The protein operates within quinol/quinone metabolism; 1,4-dihydroxy-2-naphthoate biosynthesis; 1,4-dihydroxy-2-naphthoate from chorismate: step 2/7. Its pathway is quinol/quinone metabolism; menaquinone biosynthesis. Catalyzes the thiamine diphosphate-dependent decarboxylation of 2-oxoglutarate and the subsequent addition of the resulting succinic semialdehyde-thiamine pyrophosphate anion to isochorismate to yield 2-succinyl-5-enolpyruvyl-6-hydroxy-3-cyclohexene-1-carboxylate (SEPHCHC). The protein is 2-succinyl-5-enolpyruvyl-6-hydroxy-3-cyclohexene-1-carboxylate synthase of Pectobacterium carotovorum subsp. carotovorum (strain PC1).